The chain runs to 488 residues: Spermatogenesis-associated protein 6 (488 aa).

The signal sequence occupies residues Met-1–Ser-17. The segment at Pro-175–Arg-225 is disordered. Polar residues predominate over residues Cys-200–Pro-220. Residues Ser-217 and Ser-219 each carry the phosphoserine modification. Residue Lys-248 forms a Glycyl lysine isopeptide (Lys-Gly) (interchain with G-Cter in SUMO2) linkage. Phosphoserine occurs at positions 265, 274, 325, 343, 346, 354, 424, 465, and 487.

Belongs to the SPATA6 family. Interacts with MYL6. In terms of tissue distribution, testis-specific, in spermatocytes.

Its subcellular location is the secreted. It localises to the cell projection. It is found in the cilium. The protein localises to the flagellum. In terms of biological role, required for formation of the sperm connecting piece during spermiogenesis. Sperm connecting piece is essential for linking the developing flagellum to the head during late spermiogenesis. May be involved in myosin-based microfilament transport through interaction with myosin subunits. This Rattus norvegicus (Rat) protein is Spermatogenesis-associated protein 6 (Spata6).